Consider the following 658-residue polypeptide: Structure-specific endonuclease subunit SLX4 (658 aa).

Disordered stretches follow at residues 17 to 37, 74 to 123, and 327 to 383; these read VDSD…IPGD, GATE…KSIT, and QPGV…QVLQ. 2 stretches are compositionally biased toward low complexity: residues 75 to 90 and 99 to 108; these read ATES…PPAK and KAAGRTSTGT. Polar residues predominate over residues 365-374; that stretch reads FPKSPTSTPE.

The protein belongs to the SLX4 family. As to quaternary structure, forms a heterodimer with SLX1. Post-translationally, phosphorylated in response to DNA damage.

The protein localises to the nucleus. Its function is as follows. Regulatory subunit of the SLX1-SLX4 structure-specific endonuclease that resolves DNA secondary structures generated during DNA repair and recombination. Has endonuclease activity towards branched DNA substrates, introducing single-strand cuts in duplex DNA close to junctions with ss-DNA. The sequence is that of Structure-specific endonuclease subunit SLX4 from Lachancea thermotolerans (strain ATCC 56472 / CBS 6340 / NRRL Y-8284) (Yeast).